Here is a 737-residue protein sequence, read N- to C-terminus: Protein bicaudal D homolog (737 aa).

Coiled coils occupy residues 1 to 255, 292 to 319, and 547 to 684; these read MAES…RNAE, GSSD…EKIF, and AENE…DRDR. A disordered region spans residues 72-97; it reads YRSQHQRSTRSELENEESLLEESSAK. Residues 686–737 form a disordered region; the sequence is VFKRSSTRAPTRETYQPPRAVRYPGSTTTAQQPAPSSSGGSRGGPRRGDNQQ. Positions 710–719 are enriched in polar residues; the sequence is GSTTTAQQPA.

It belongs to the BicD family. As to quaternary structure, component of a dynein-regulating complex composed of at least bicd-1, dlc-1 and egal-1. Interacts with egal-1 and unc-83. As to expression, expressed in the excretory cell, body wall muscles, vulval muscle cells, PVD and FLP sensory neurons and AVF interneurons.

It is found in the nucleus envelope. The protein localises to the perikaryon. It localises to the cell projection. The protein resides in the dendrite. Part of a complex with dlc-1 and egal-1, which is recruited to the nuclear envelope by unc-83, where in turn, it recruits dynein to the nuclear surface and regulates nuclear migration in hypodermal precursor cells. Required for the formation of dendritic branches of PVD sensory neurons. In Caenorhabditis elegans, this protein is Protein bicaudal D homolog.